A 346-amino-acid chain; its full sequence is Methylthioribose-1-phosphate isomerase (346 aa).

Substrate is bound by residues R54–A56, R91, and Q192. The active-site Proton donor is the D233. N243–K244 is a binding site for substrate.

The protein belongs to the eIF-2B alpha/beta/delta subunits family. MtnA subfamily.

The enzyme catalyses 5-(methylsulfanyl)-alpha-D-ribose 1-phosphate = 5-(methylsulfanyl)-D-ribulose 1-phosphate. The protein operates within amino-acid biosynthesis; L-methionine biosynthesis via salvage pathway; L-methionine from S-methyl-5-thio-alpha-D-ribose 1-phosphate: step 1/6. Functionally, catalyzes the interconversion of methylthioribose-1-phosphate (MTR-1-P) into methylthioribulose-1-phosphate (MTRu-1-P). The chain is Methylthioribose-1-phosphate isomerase from Yersinia enterocolitica serotype O:8 / biotype 1B (strain NCTC 13174 / 8081).